The following is a 100-amino-acid chain: Vesicle-associated membrane protein 3 (100 aa).

N-acetylserine is present on Ser2. Topologically, residues 2–77 are cytoplasmic; the sequence is STGPTAATGS…KRKYWWKNCK (76 aa). The v-SNARE coiled-coil homology domain occupies 14 to 74; it reads RLQQTQNQVD…AKLKRKYWWK (61 aa). Glycyl lysine isopeptide (Lys-Gly) (interchain with G-Cter in ubiquitin) cross-links involve residues Lys66, Lys68, and Lys77. The helical; Anchor for type IV membrane protein transmembrane segment at 78 to 98 threads the bilayer; sequence MWAIGITVLVIFIIIIIVWVV. At 99-100 the chain is on the vesicular side; sequence SS.

The protein belongs to the synaptobrevin family. Interacts with POPDC1 (via the C-terminus cytoplasmic tail). Interacts with BCAP31; involved in VAMP3 export from the endoplasmic reticulum. Interacts with BAIAP3; this interaction is increased in the presence of calcium. Interacts with PICALM. In terms of processing, ubiquitinated by RNF167 at Lys-66, Lys-68 and Lys-77, regulating the recycling endosome pathway. Post-translationally, (Microbial infection) Targeted and hydrolyzed by C.botulinum neurotoxin type B (BoNT/B, botB) which hydrolyzes the 59-Gln-|-Phe-60 bond and probably inhibits neurotransmitter release. (Microbial infection) Targeted and hydrolyzed by C.botulinum neurotoxin type D (BoNT/D, botD) which hydrolyzes the 42-Lys-|-Leu-43 bond and probably inhibits neurotransmitter release. Note that humans are not known to be infected by C.botulinum type D. In terms of processing, (Microbial infection) Targeted and hydrolyzed by C.botulinum neurotoxin type F (BoNT/F, botF) which hydrolyzes the 41-Gln-|-Lys-42 bond and probably inhibits neurotransmitter release.

The protein resides in the early endosome membrane. The protein localises to the recycling endosome membrane. It localises to the synapse. It is found in the synaptosome. Functionally, SNARE involved in vesicular transport from the late endosomes to the trans-Golgi network. The sequence is that of Vesicle-associated membrane protein 3 (VAMP3) from Homo sapiens (Human).